Here is a 285-residue protein sequence, read N- to C-terminus: mRNA decay factor CTH2 (285 aa).

The required for mRNA decay activity stretch occupies residues 37 to 55; sequence INIRELEEYYNKTILNEDN. Residues 132 to 164 form a disordered region; that stretch reads LQQLSQQKPKNDASFSSEKESSAQPKVKSQVQE. Positions 153–164 are enriched in polar residues; sequence SAQPKVKSQVQE. 2 C3H1-type zinc fingers span residues 169 to 197 and 207 to 235; these read LYKT…HGLG and NFRT…HGDD. Residues 252–271 form a disordered region; that stretch reads STSKQSDEKRSNGRGSAKKK.

In terms of assembly, interacts with DHH1.

The protein localises to the nucleus. Its subcellular location is the cytoplasm. It is found in the P-body. In terms of biological role, binds to specific AU-rich elements (ARE) in the 3'-untranslated region of target mRNAs and promotes their degradation. In response to iron deficiency, promotes the decay of many mRNAs encoding proteins involved in iron-dependent pathways. Recruits the DHH1 helicase to the SDH4 mRNA and promotes SDH4 mRNA decay. Also destabilizes target mRNA by modulating 3'-end processing, creating extended transcripts that are prone for degradation. This chain is mRNA decay factor CTH2 (TIS11), found in Saccharomyces cerevisiae (strain ATCC 204508 / S288c) (Baker's yeast).